A 68-amino-acid polypeptide reads, in one-letter code: ATP-dependent 6-phosphofructokinase (68 aa).

17-20 lines the ATP pocket; sequence GDGT. Asp18 serves as a coordination point for Mg(2+). Catalysis depends on Asp48, which acts as the Proton acceptor.

This sequence belongs to the phosphofructokinase type A (PFKA) family. PPi-dependent PFK group II subfamily. Atypical ATP-dependent clade 'X' sub-subfamily. As to quaternary structure, homotetramer. Mg(2+) serves as cofactor.

It is found in the cytoplasm. It catalyses the reaction beta-D-fructose 6-phosphate + ATP = beta-D-fructose 1,6-bisphosphate + ADP + H(+). It participates in carbohydrate degradation; glycolysis; D-glyceraldehyde 3-phosphate and glycerone phosphate from D-glucose: step 3/4. Its activity is regulated as follows. Allosterically activated by AMP. Functionally, catalyzes the phosphorylation of D-fructose 6-phosphate to fructose 1,6-bisphosphate by ATP, the first committing step of glycolysis. This is ATP-dependent 6-phosphofructokinase (PFK) from Triticum aestivum (Wheat).